A 284-amino-acid polypeptide reads, in one-letter code: Bifunctional protein FolD 2 (284 aa).

Residues 164–166, Ser189, and Ile230 each bind NADP(+); that span reads GRG.

The protein belongs to the tetrahydrofolate dehydrogenase/cyclohydrolase family. Homodimer.

The catalysed reaction is (6R)-5,10-methylene-5,6,7,8-tetrahydrofolate + NADP(+) = (6R)-5,10-methenyltetrahydrofolate + NADPH. The enzyme catalyses (6R)-5,10-methenyltetrahydrofolate + H2O = (6R)-10-formyltetrahydrofolate + H(+). It participates in one-carbon metabolism; tetrahydrofolate interconversion. Its function is as follows. Catalyzes the oxidation of 5,10-methylenetetrahydrofolate to 5,10-methenyltetrahydrofolate and then the hydrolysis of 5,10-methenyltetrahydrofolate to 10-formyltetrahydrofolate. In Desulfitobacterium hafniense (strain Y51), this protein is Bifunctional protein FolD 2.